A 375-amino-acid polypeptide reads, in one-letter code: Protein RIC-3 (375 aa).

A signal peptide spans 1–29 (MALSAVQKVVLFSCLVLCVSLLLPRAYIA). The Lumenal segment spans residues 30-90 (RGKPAAQEGN…GGGGGTRPSL (61 aa)). A compositionally biased stretch (polar residues) spans 38 to 47 (GNTGLFQSSG). Residues 38–63 (GNTGLFQSSGHHPKPTDGRPGGAHFP) form a disordered region. Residues 91 to 111 (VGQIIPIYGFGILLYILYILF) traverse the membrane as a helical segment. Topologically, residues 112–375 (KLSSKGKSTK…RKRNTKGIEY (264 aa)) are cytoplasmic. Residues 135-165 (KRKITDYELSQLQDKLKETEEAMEKIISRLG) adopt a coiled-coil conformation. Residues 251 to 375 (SAEQVAEQMG…RKRNTKGIEY (125 aa)) are disordered. Positions 286 to 296 (GDQQAQGTISA) are enriched in polar residues. Acidic residues predominate over residues 305 to 319 (EDIEEDEDEDEDPEV). Basic residues predominate over residues 365–375 (LRKRNTKGIEY).

This sequence belongs to the ric-3 family.

Its subcellular location is the endoplasmic reticulum membrane. Functionally, molecular chaperone which facilitates proper subunit assembly andsurface trafficking of alpha-7 (CHRNA7) and alpha-8 (CHRNA8) nicotinic acetylcholine receptors. May also promote functional expression of homomeric serotoninergic 5-HT3 receptors, and of heteromeric acetylcholine receptors. The chain is Protein RIC-3 (ric3) from Xenopus tropicalis (Western clawed frog).